A 469-amino-acid polypeptide reads, in one-letter code: Adenosylhomocysteinase (469 aa).

The substrate site is built by Thr63, Asp139, and Glu164. 165–167 (TTT) contributes to the NAD(+) binding site. Substrate is bound by residues Lys194 and Asp198. Residues Asn199, 228–233 (GYGDVG), Glu251, Asn300, 321–323 (IGH), and Asn375 contribute to the NAD(+) site.

This sequence belongs to the adenosylhomocysteinase family. It depends on NAD(+) as a cofactor.

It localises to the cytoplasm. The enzyme catalyses S-adenosyl-L-homocysteine + H2O = L-homocysteine + adenosine. It functions in the pathway amino-acid biosynthesis; L-homocysteine biosynthesis; L-homocysteine from S-adenosyl-L-homocysteine: step 1/1. May play a key role in the regulation of the intracellular concentration of adenosylhomocysteine. The sequence is that of Adenosylhomocysteinase from Pseudomonas putida (strain W619).